An 867-amino-acid polypeptide reads, in one-letter code: 2-methylcitrate dehydratase (2-methyl-trans-aconitate forming) (867 aa).

[4Fe-4S] cluster-binding residues include cysteine 410, cysteine 476, and cysteine 479.

This sequence belongs to the aconitase/IPM isomerase family. [4Fe-4S] cluster is required as a cofactor.

The catalysed reaction is (2S,3S)-2-methylcitrate = 2-methyl-trans-aconitate + H2O. It catalyses the reaction citrate = D-threo-isocitrate. The protein operates within organic acid metabolism; propanoate degradation. Its activity is regulated as follows. Inhibited by ferricyanide and EDTA. In terms of biological role, involved in the catabolism of short chain fatty acids (SCFA) via the 2-methylcitrate cycle II (propionate degradation route). In vivo under anaerobic conditions, AcnD catalyzes the stereospecific dehydration of (2S,3S)-methylcitrate (2-MC) to yield the trans isomer of 2-methyl-aconitate (2-MCA). AcnD can also accept citrate and cis-aconitate, but with a lower efficiency. 2-methylisocitrate and isocitrate are not substrates. The sequence is that of 2-methylcitrate dehydratase (2-methyl-trans-aconitate forming) (acnD) from Shewanella oneidensis (strain ATCC 700550 / JCM 31522 / CIP 106686 / LMG 19005 / NCIMB 14063 / MR-1).